We begin with the raw amino-acid sequence, 150 residues long: D-aminoacyl-tRNA deacylase (150 aa).

A Gly-cisPro motif, important for rejection of L-amino acids motif is present at residues 138–139; that stretch reads GP.

This sequence belongs to the DTD family. As to quaternary structure, homodimer.

The protein resides in the cytoplasm. The catalysed reaction is glycyl-tRNA(Ala) + H2O = tRNA(Ala) + glycine + H(+). The enzyme catalyses a D-aminoacyl-tRNA + H2O = a tRNA + a D-alpha-amino acid + H(+). An aminoacyl-tRNA editing enzyme that deacylates mischarged D-aminoacyl-tRNAs. Also deacylates mischarged glycyl-tRNA(Ala), protecting cells against glycine mischarging by AlaRS. Acts via tRNA-based rather than protein-based catalysis; rejects L-amino acids rather than detecting D-amino acids in the active site. By recycling D-aminoacyl-tRNA to D-amino acids and free tRNA molecules, this enzyme counteracts the toxicity associated with the formation of D-aminoacyl-tRNA entities in vivo and helps enforce protein L-homochirality. The chain is D-aminoacyl-tRNA deacylase from Sorangium cellulosum (strain So ce56) (Polyangium cellulosum (strain So ce56)).